A 583-amino-acid chain; its full sequence is MVRLNLAVVALAAGALSASASASSSATPLRGLLTDAAKYQPTKDAQSQLRWKCLDGSKELSWSAVNDDYCDCPDGSDEPGTSACPNSSFYCHNTGHMPAYIRSSRVDDGICDPECCDGSDESDGKIRCPNRCEKVGKEYRKKLAELDNLRRAGAKVRDKYIAEGRKQKELLHAEIAKLEIEVQVATENEARFKAELTRAETSDKALIDAKVKTPLYTKLVDYQNAIRALHVKNAALKAELQTLTLLLDDLAKGYNPNYQDMAVKGAVVAYKEWRGIASAAAAATATGEVKEEGENNVDQIAGENTKLNELLDEGDWPWAKLSTLLSDDPLDLMDRGLGGALDDKRVYASETDGGLLFRIHEYLPDGIVPYFEAMVDTLLDVLMKANVITDVKRMRPKSSVGSESEPETVSVARRAHTDAAAHLSRTTHELSSLKQKLSEFSTRYGRSAEFKALENKCFSKDMGEYTYEYCFFGRATQIPNNGGAQISLGTFTNFNPKHDKSADEDAYWLQQIYARGQKCWNGPERSAIVDLECSTENKVLDVFEAEKCIYSIKVATPAVCFPPQQQQAQQTQQDGGHQVKDEL.

The first 26 residues, 1–26 (MVRLNLAVVALAAGALSASASASSSA), serve as a signal peptide directing secretion. C91 and C115 are disulfide-bonded. A coiled-coil region spans residues 130–252 (NRCEKVGKEY…LTLLLDDLAK (123 aa)). The region spanning 455 to 562 (NKCFSKDMGE…KVATPAVCFP (108 aa)) is the MRH domain. Cystine bridges form between C457–C470, C519–C548, and C533–C560. The Prevents secretion from ER motif lies at 580 to 583 (KDEL).

In terms of assembly, heterodimer of a catalytic subunit alpha and a subunit beta.

It is found in the endoplasmic reticulum. Subunit of glucosidase 2, which cleaves sequentially the 2 innermost alpha-1,3-linked glucose residues from the Glc(2)Man(9)GlcNAc(2) oligosaccharide precursor of immature glycoproteins in the endoplasmic reticulum (ER). Specifically required for the cleavage of the final glucose. The subunit beta retains the catalytic subunit alpha in the ER. This chain is Glucosidase 2 subunit beta, found in Mycosarcoma maydis (Corn smut fungus).